The sequence spans 343 residues: Putative outer membrane protein y4fJ (343 aa).

The N-terminal stretch at 1 to 17 (MRMNFSTVLLGSSVALA) is a signal peptide.

It belongs to the alphaproteobacteria porin family.

It localises to the cell outer membrane. May act as an outer membrane pore. In Sinorhizobium fredii (strain NBRC 101917 / NGR234), this protein is Putative outer membrane protein y4fJ.